Consider the following 20-residue polypeptide: Hemocyanin subunit 6 (20 aa).

This sequence belongs to the tyrosinase family. Hemocyanin subfamily. Hemolymph.

It is found in the secreted. Its subcellular location is the extracellular space. Hemocyanins are copper-containing oxygen carriers occurring freely dissolved in the hemolymph of many mollusks and arthropods. The chain is Hemocyanin subunit 6 from Homarus americanus (American lobster).